Reading from the N-terminus, the 120-residue chain is Large ribosomal subunit protein uL18 (120 aa).

Belongs to the universal ribosomal protein uL18 family. In terms of assembly, part of the 50S ribosomal subunit; part of the 5S rRNA/L5/L18/L25 subcomplex. Contacts the 5S and 23S rRNAs.

Functionally, this is one of the proteins that bind and probably mediate the attachment of the 5S RNA into the large ribosomal subunit, where it forms part of the central protuberance. The polypeptide is Large ribosomal subunit protein uL18 (Rhodopseudomonas palustris (strain BisB18)).